We begin with the raw amino-acid sequence, 271 residues long: Secretagogin (271 aa).

6 EF-hand domains span residues 8 to 43 (LDAA…LLKK), 53 to 88 (KVQG…EDEN), 100 to 135 (DNSV…LFLQ), 144 to 179 (KLDE…QENF), 192 to 227 (ERKS…MMEL), and 235 to 271 (VDLD…KANP). The Ca(2+) site is built by Asp-21, Asp-23, Asn-25, Tyr-27, and Glu-32. Residues Asp-113, Asp-115, Ser-117, Glu-124, Asn-159, Asp-161, Arg-163, Asp-168, Asp-205, Ser-207, Thr-209, Glu-216, Asp-249, Asn-251, Asp-253, Lys-255, and Glu-260 each coordinate Ca(2+).

Its subcellular location is the cytoplasm. This is Secretagogin (scgn) from Xenopus laevis (African clawed frog).